Here is a 239-residue protein sequence, read N- to C-terminus: MAMRTRAEKRMRKFLIEQLKTRQQNGARIAQGKKSEHELIKNNLGPQVFVFRNLFSGQVLYSQVPAYHENQINQQFLSPNWQNRKPSRRQDLWKIMCVVNFNNYEYAIAAYKGLVDLRKTRDVVQKKEANEMRKKNDDGNIWYSGQFRPTYTQEAVADLTHVIDEFELEGTKIFWANEWHRGDDKHWRADLVEHDKLPVYDPRHQTVLLDIMREKAIEAFRENNTSEETIENATEPETA.

It belongs to the mitochondrion-specific ribosomal protein mL67 family. Component of the mitochondrial large ribosomal subunit (mt-LSU).

The protein localises to the nucleus. It localises to the mitochondrion. In terms of biological role, component of the mitochondrial ribosome (mitoribosome), a dedicated translation machinery responsible for the synthesis of mitochondrial genome-encoded proteins, including at least some of the essential transmembrane subunits of the mitochondrial respiratory chain. The mitoribosomes are attached to the mitochondrial inner membrane and translation products are cotranslationally integrated into the membrane. mL67/MHR1 also has extraribosomal functions, being involved in regulation of mitochondrial DNA recombination, maintenance and repair, and generation of homoplasmic cells. mL67/MHR1 also acts as transcription factor involved in regulation of RNA polymerase II-dependent transcription. This is Large ribosomal subunit protein mL67 (MHR1) from Candida albicans (strain SC5314 / ATCC MYA-2876) (Yeast).